The chain runs to 314 residues: Olfactory receptor 9I1 (314 aa).

Over 1–25 the chain is Extracellular; the sequence is MAKNNLTRVTEFILMGFMDHPKLEI. Residue N5 is glycosylated (N-linked (GlcNAc...) asparagine). Residues 26–46 form a helical membrane-spanning segment; sequence PLFLVFLSFYLVTLLGNVGMI. Topologically, residues 47–54 are cytoplasmic; it reads MLIQVDVK. Residues 55-75 form a helical membrane-spanning segment; sequence LYTPMYFFLSHLSLLDACYTS. Topologically, residues 76–99 are extracellular; sequence VITPQILATLATGKTVISYGHCAA. The cysteines at positions 97 and 189 are disulfide-linked. The helical transmembrane segment at 100 to 120 threads the bilayer; sequence QFFLFTICAGTECFLLAVMAY. Residues 121-139 lie on the Cytoplasmic side of the membrane; it reads DRYAAIRNPLLYTVAMNPR. The chain crosses the membrane as a helical span at residues 140–160; sequence LCWSLVVGAYVCGVSGAILRT. The Extracellular portion of the chain corresponds to 161–197; sequence TCTFTLSFCKDNQINFFFCDLPPLLKLACSDTANIEI. A helical transmembrane segment spans residues 198 to 217; that stretch reads VIIFFGNFVILANASVILIS. Residues 218–237 are Cytoplasmic-facing; it reads YLLIIKTILKVKSSGGRAKT. A helical membrane pass occupies residues 238 to 258; the sequence is FSTCASHITAVALFFGALIFM. Residues 259-271 lie on the Extracellular side of the membrane; that stretch reads YLQSGSGKSLEED. A helical membrane pass occupies residues 272-292; it reads KVVSVFYTVVIPMLNPLIYSL. The Cytoplasmic segment spans residues 293–314; it reads RNKDVKDAFRKVARRLQVSLSM.

This sequence belongs to the G-protein coupled receptor 1 family.

Its subcellular location is the cell membrane. Odorant receptor. In Homo sapiens (Human), this protein is Olfactory receptor 9I1 (OR9I1).